A 117-amino-acid polypeptide reads, in one-letter code: Immunoglobulin heavy variable 3-5 (117 aa).

A signal peptide spans 1–18 (MKMFTLLYLLTVVPGILS). The Ig-like domain occupies 19–117 (DVQLQESGPG…EDTATYYCAR (99 aa)). Residues cysteine 40 and cysteine 115 are joined by a disulfide bond.

This chain is Immunoglobulin heavy variable 3-5, found in Mus musculus (Mouse).